Here is a 433-residue protein sequence, read N- to C-terminus: Probable mannose-6-phosphate isomerase (433 aa).

Zn(2+) is bound by residues Gln-103, His-105, Glu-130, and His-277. Residue Arg-296 is part of the active site.

The protein belongs to the mannose-6-phosphate isomerase type 1 family. It depends on Zn(2+) as a cofactor.

It is found in the cytoplasm. The enzyme catalyses D-mannose 6-phosphate = D-fructose 6-phosphate. Its pathway is nucleotide-sugar biosynthesis; GDP-alpha-D-mannose biosynthesis; alpha-D-mannose 1-phosphate from D-fructose 6-phosphate: step 1/2. In terms of biological role, involved in the synthesis of the GDP-mannose and dolichol-phosphate-mannose required for a number of critical mannosyl transfer reactions. The sequence is that of Probable mannose-6-phosphate isomerase (PMIH) from Echinococcus multilocularis (Fox tapeworm).